We begin with the raw amino-acid sequence, 22 residues long: Antimicrobial peptide 4 (22 aa).

Expressed by the skin glands.

Its subcellular location is the secreted. Functionally, has very strong antimicrobial activity against Gram-positive bacterium S.aureus and yeast C.albicans, and very weak activity against Gram-negative bacterium E.coli. Has strong hemolytic activity against human red blood cells. The chain is Antimicrobial peptide 4 from Xenopus tropicalis (Western clawed frog).